The chain runs to 224 residues: Phosphoglycolate phosphatase (224 aa).

D11 serves as the catalytic Nucleophile. Mg(2+)-binding residues include D11, D13, and D177.

It belongs to the HAD-like hydrolase superfamily. CbbY/CbbZ/Gph/YieH family. Requires Mg(2+) as cofactor.

It carries out the reaction 2-phosphoglycolate + H2O = glycolate + phosphate. It functions in the pathway organic acid metabolism; glycolate biosynthesis; glycolate from 2-phosphoglycolate: step 1/1. Specifically catalyzes the dephosphorylation of 2-phosphoglycolate. Is involved in the dissimilation of the intracellular 2-phosphoglycolate formed during the DNA repair of 3'-phosphoglycolate ends, a major class of DNA lesions induced by oxidative stress. The polypeptide is Phosphoglycolate phosphatase (Mannheimia succiniciproducens (strain KCTC 0769BP / MBEL55E)).